A 567-amino-acid chain; its full sequence is SRSF protein kinase 3 (567 aa).

Residues 1-16 (MSASTGGGGDSGGSGG) are compositionally biased toward gly residues. Residues 1–36 (MSASTGGGGDSGGSGGSSSSSQASCGPESSGSELAL) are disordered. Low complexity predominate over residues 17–32 (SSSSSQASCGPESSGS). Ser-50 is subject to Phosphoserine. Residues 79–565 (YHVVRKLGWG…AADCLQHPWL (487 aa)) form the Protein kinase domain. Residues 85–93 (LGWGHFSTV) and Lys-108 each bind ATP. The active-site Proton acceptor is the Asp-212. Disordered stretches follow at residues 238 to 283 (QQAG…RLLE) and 298 to 351 (ATQA…SQTS). Over residues 248 to 258 (SIVSTAPQEVL) the composition is skewed to polar residues. Residues 264-279 (SKNKRKKMRRKRKQQK) show a composition bias toward basic residues. Residues 327-348 (AGPSPASSSPAPGGGRSLSAGS) show a composition bias toward low complexity. At Ser-330 the chain carries Phosphoserine.

The protein belongs to the protein kinase superfamily. CMGC Ser/Thr protein kinase family. Expressed in skeletal and heart muscle. Also expressed in the fetal brain.

The protein localises to the nucleus. It is found in the cytoplasm. It carries out the reaction L-seryl-[protein] + ATP = O-phospho-L-seryl-[protein] + ADP + H(+). The enzyme catalyses L-threonyl-[protein] + ATP = O-phospho-L-threonyl-[protein] + ADP + H(+). Functionally, serine/arginine-rich protein-specific kinase which specifically phosphorylates its substrates at serine residues located in regions rich in arginine/serine dipeptides, known as RS domains. Phosphorylates the SR splicing factor SRSF1 and the lamin-B receptor (LBR) in vitro. Required for normal muscle development. In Homo sapiens (Human), this protein is SRSF protein kinase 3 (SRPK3).